A 172-amino-acid polypeptide reads, in one-letter code: Myosin regulatory light chain (172 aa).

Threonine 17 is subject to Phosphothreonine. Residue serine 18 is modified to Phosphoserine. 3 EF-hand domains span residues 27–62 (AQIQ…LGKE), 98–133 (DPEE…MGER), and 134–168 (YSEE…GTKD). The Ca(2+) site is built by aspartate 40, asparagine 42, aspartate 44, and aspartate 51.

As to quaternary structure, myosin is a hexamer of 2 heavy chains and 4 light chains (two regulatory light chains and two essential light chains). In terms of processing, may be phosphorylated by let-502 or/and pak-1 and dephosphorylated by mel-11 to regulate its activation and myosin II-mediated contraction. Expressed in the spermathecal and uterine walls. Weak expression in gonadal sheath and intestinal muscle. Not detected in vulval, pharyngeal or body wall muscles.

The protein resides in the cytoplasm. It is found in the cytoskeleton. Functionally, regulates myosin II activity and organization during embryo elongation. May be involved in the organization of mlc-5 into bundles. Required maternally for cytokinesis during meiosis and mitosis in the early embryo and for the establishment of embryonic anterior-posterior polarity. In Caenorhabditis elegans, this protein is Myosin regulatory light chain.